Consider the following 426-residue polypeptide: 3-isopropylmalate dehydratase large subunit (426 aa).

Positions 307, 367, and 370 each coordinate [4Fe-4S] cluster.

The protein belongs to the aconitase/IPM isomerase family. LeuC type 2 subfamily. Heterodimer of LeuC and LeuD. [4Fe-4S] cluster serves as cofactor.

It carries out the reaction (2R,3S)-3-isopropylmalate = (2S)-2-isopropylmalate. Its pathway is amino-acid biosynthesis; L-leucine biosynthesis; L-leucine from 3-methyl-2-oxobutanoate: step 2/4. In terms of biological role, catalyzes the isomerization between 2-isopropylmalate and 3-isopropylmalate, via the formation of 2-isopropylmaleate. This Aliarcobacter butzleri (strain RM4018) (Arcobacter butzleri) protein is 3-isopropylmalate dehydratase large subunit.